We begin with the raw amino-acid sequence, 333 residues long: Glycerol-3-phosphate dehydrogenase [NAD(P)+] (333 aa).

NADPH is bound by residues S13, W14, R34, and K108. Sn-glycerol 3-phosphate contacts are provided by K108, G137, and S139. Position 141 (A141) interacts with NADPH. The sn-glycerol 3-phosphate site is built by K192, D245, S255, R256, and N257. K192 acts as the Proton acceptor in catalysis. R256 serves as a coordination point for NADPH. E282 lines the NADPH pocket.

Belongs to the NAD-dependent glycerol-3-phosphate dehydrogenase family.

The protein resides in the cytoplasm. It catalyses the reaction sn-glycerol 3-phosphate + NAD(+) = dihydroxyacetone phosphate + NADH + H(+). The enzyme catalyses sn-glycerol 3-phosphate + NADP(+) = dihydroxyacetone phosphate + NADPH + H(+). The protein operates within membrane lipid metabolism; glycerophospholipid metabolism. Its function is as follows. Catalyzes the reduction of the glycolytic intermediate dihydroxyacetone phosphate (DHAP) to sn-glycerol 3-phosphate (G3P), the key precursor for phospholipid synthesis. This chain is Glycerol-3-phosphate dehydrogenase [NAD(P)+], found in Thioalkalivibrio sulfidiphilus (strain HL-EbGR7).